Here is a 263-residue protein sequence, read N- to C-terminus: Trans-aconitate 2-methyltransferase (263 aa).

Belongs to the methyltransferase superfamily. Tam family.

Its subcellular location is the cytoplasm. The enzyme catalyses trans-aconitate + S-adenosyl-L-methionine = (E)-3-(methoxycarbonyl)pent-2-enedioate + S-adenosyl-L-homocysteine. In terms of biological role, catalyzes the S-adenosylmethionine monomethyl esterification of trans-aconitate. This chain is Trans-aconitate 2-methyltransferase, found in Mycobacterium marinum (strain ATCC BAA-535 / M).